Reading from the N-terminus, the 419-residue chain is UPF0329 protein ECU07_1890/ECU10_0010 (419 aa).

Positions Arg136–Ala165 are enriched in basic and acidic residues. The segment at Arg136–Gly222 is disordered. The span at Lys213–Gly222 shows a compositional bias: basic residues.

The protein belongs to the UPF0329 family.

The chain is UPF0329 protein ECU07_1890/ECU10_0010 from Encephalitozoon cuniculi (strain GB-M1) (Microsporidian parasite).